The primary structure comprises 86 residues: Large ribosomal subunit protein bL31 (86 aa).

Residues 65 to 86 (YGMGSANSATSKEQKEEKDSKK) are disordered. Positions 76-86 (KEQKEEKDSKK) are enriched in basic and acidic residues.

This sequence belongs to the bacterial ribosomal protein bL31 family. Type A subfamily. In terms of assembly, part of the 50S ribosomal subunit.

In terms of biological role, binds the 23S rRNA. The polypeptide is Large ribosomal subunit protein bL31 (Prochlorococcus marinus (strain AS9601)).